The chain runs to 125 residues: Cu-Zn superoxide dismutase-like protein OPG175 (125 aa).

Cysteine 52 and cysteine 102 are joined by a disulfide.

This sequence belongs to the Cu-Zn superoxide dismutase family.

The protein resides in the virion. Its subcellular location is the host cytoplasm. In terms of biological role, superoxide dismutase-like protein with no enzymatic activity. The polypeptide is Cu-Zn superoxide dismutase-like protein OPG175 (OPG175) (Monkeypox virus).